The primary structure comprises 221 residues: Putative adhesin P1-like protein MPN_131 (221 aa).

Residues 13-36 show a composition bias toward low complexity; the sequence is RYGNNHRGSNSSTSGVTTQGQSQN. 2 disordered regions span residues 13 to 51 and 90 to 183; these read RYGN…NVGV and GWRN…TPSG. Over residues 37-48 the composition is skewed to polar residues; it reads ASSNEPAPTFSN. Over residues 130–139 the composition is skewed to basic and acidic residues; that stretch reads LKQDKADKSG. Composition is skewed to polar residues over residues 149 to 160 and 174 to 183; these read SGDNLTNYTNLP and HSPTRTTPSG.

It belongs to the adhesin P1 family.

This is Putative adhesin P1-like protein MPN_131 from Mycoplasma pneumoniae (strain ATCC 29342 / M129 / Subtype 1) (Mycoplasmoides pneumoniae).